A 444-amino-acid polypeptide reads, in one-letter code: UDP-N-acetylglucosamine 1-carboxyvinyltransferase (444 aa).

Residue 22 to 23 (KN) participates in phosphoenolpyruvate binding. Arginine 94 is a binding site for UDP-N-acetyl-alpha-D-glucosamine. Catalysis depends on aspartate 119, which acts as the Proton donor. Residues aspartate 309 and valine 331 each coordinate UDP-N-acetyl-alpha-D-glucosamine.

The protein belongs to the EPSP synthase family. MurA subfamily.

The protein resides in the cytoplasm. The enzyme catalyses phosphoenolpyruvate + UDP-N-acetyl-alpha-D-glucosamine = UDP-N-acetyl-3-O-(1-carboxyvinyl)-alpha-D-glucosamine + phosphate. The protein operates within cell wall biogenesis; peptidoglycan biosynthesis. Cell wall formation. Adds enolpyruvyl to UDP-N-acetylglucosamine. The polypeptide is UDP-N-acetylglucosamine 1-carboxyvinyltransferase (Chlamydia trachomatis serovar A (strain ATCC VR-571B / DSM 19440 / HAR-13)).